Consider the following 748-residue polypeptide: MIPAASSTPPGDALFPSVAPQDFWRSQVTGYSGSVTRHLSHRANNFKRHPKRRKCIRPSPPPPPNTPCPLELVDFGDLHPQRSFRELLFNGCILFGIEFSYAMETAYVTPVLLQMGLPDQLYSLVWFISPILGFLLQPLLGAWSDRCTSRFGRRRPFILVLAIGALLGLSLLLNGRDIGIALADVTGNHKWGLLLTVCGVVLMDFSADSADNPSHAYMMDVCSPADQDRGLNIHALLAGLGGGFGYVVGGIHWDKTGFGRALGGQLRVIYLFTAVTLSVTTVLTLVSIPERPLRPPSEKRAAMKSPSLPLPPSPPVLPEEGPGDSLPSHTATNFSSPISPPSPLTPKYGSFISRDSSLTGISEFASSFGTANIDSVLIDCFTGGHDSYLAIPGSVPRPPISVSFPRAPDGFYRQDRGLLEGREGALTSGCDGDILRVGSLDTSKPRSSGILKRPQTLAIPDAAGGGGPETSRRRNVTFSQQVANILLNGVKYESELTGSSERAEQPLSVGRLCSTICNMPKALRTLCVNHFLGWLSFEGMLLFYTDFMGEVVFQGDPKAPHTSEAYQKYNSGVTMGCWGMCIYAFSAAFYSAILEKLEEFLSVRTLYFIAYLAFGLGTGLATLSRNLYVVLSLCITYGILFSTLCTLPYSLLCDYYQSKKFAGSSADGTRRGMGVDISLLSCQYFLAQILVSLVLGPLTSAVGSANGVMYFSSLVSFLGCLYSSLFVIYEIPPSDAADEEHRPLLLNV.

6 consecutive transmembrane segments (helical) span residues 93–113 (ILFGIEFSYAMETAYVTPVLL), 123–143 (SLVWFISPILGFLLQPLLGAW), 155–175 (RPFILVLAIGALLGLSLLLNG), 191–211 (WGLLLTVCGVVLMDFSADSAD), 233–253 (IHALLAGLGGGFGYVVGGIHW), and 268–288 (VIYLFTAVTLSVTTVLTLVSI). The interval 294–339 (RPPSEKRAAMKSPSLPLPPSPPVLPEEGPGDSLPSHTATNFSSPIS) is disordered. Over residues 308 to 317 (LPLPPSPPVL) the composition is skewed to pro residues. The residue at position 497 (T497) is a Phosphothreonine. 6 helical membrane passes run 533–553 (GWLSFEGMLLFYTDFMGEVVF), 573–593 (VTMGCWGMCIYAFSAAFYSAI), 600–620 (FLSVRTLYFIAYLAFGLGTGL), 627–647 (LYVVLSLCITYGILFSTLCTL), 685–705 (FLAQILVSLVLGPLTSAVGSA), and 708–728 (VMYFSSLVSFLGCLYSSLFVI).

The protein belongs to the glycoside-pentoside-hexuronide (GPH) cation symporter transporter (TC 2.A.2) family. In terms of tissue distribution, expressed in adult heart, brain, muscle and kidney, with very strong expression in brain. Also expressed in fetal brain, kidney and lung.

Its subcellular location is the membrane. The catalysed reaction is D-galactose(in) + H(+)(in) = D-galactose(out) + H(+)(out). It carries out the reaction D-glucose(out) + H(+)(out) = D-glucose(in) + H(+)(in). Proton-associated glucose transporter in the brain. The polypeptide is Proton-associated sugar transporter A (Homo sapiens (Human)).